A 276-amino-acid chain; its full sequence is Large ribosomal subunit protein uL2 (276 aa).

The interval 221–276 (RGSAMNPNDHPHGGGEGRAPIGRKSPMTPWGKKARGVKTRDRKKASNALIIRRRTK) is disordered. The segment covering 252–276 (KKARGVKTRDRKKASNALIIRRRTK) has biased composition (basic residues).

Belongs to the universal ribosomal protein uL2 family. Part of the 50S ribosomal subunit. Forms a bridge to the 30S subunit in the 70S ribosome.

One of the primary rRNA binding proteins. Required for association of the 30S and 50S subunits to form the 70S ribosome, for tRNA binding and peptide bond formation. It has been suggested to have peptidyltransferase activity; this is somewhat controversial. Makes several contacts with the 16S rRNA in the 70S ribosome. The protein is Large ribosomal subunit protein uL2 of Aster yellows phytoplasma.